Here is a 524-residue protein sequence, read N- to C-terminus: MSQGSPGDWAPLDPTPGPPASPNPFVHELHLSRLQRVKFCLLGALLAPIRVLLAFIVLFLLWPFAWLQVAGLSEEQLQEPITGWRKTVCHNGVLGLSRLLFFLLGFLRIRVRGQRASRLQAPVLVAAPHSTFFDPIVLLPCDLPKVVSRAENLSVPVIGALLRFNQAILVSRHDPASRRRVVEEVRRRATSGGKWPQVLFFPEGTCSNKKALLKFKPGAFIAGVPVQPVLIRYPNSLDTTSWAWRGPGVLKVLWLTASQPCSIVDVEFLPVYHPSPEESRDPTLYANNVQRVMAQALGIPATECEFVGSLPVIVVGRLKVALEPQLWELGKVLRKAGLSAGYVDAGAEPGRSRMISQEEFARQLQLSDPQTVAGAFGYFQQDTKGLVDFRDVALALAALDGGRSLEELTRLAFELFAEEQAEGPNRLLYKDGFSTILHLLLGSPHPAATALHAELCQAGSSQGLSLCQFQNFSLHDPLYGKLFSTYLRPPHTSRGTSQTPNASSPGNPTALANGTVQAPKQKGD.

Helical transmembrane passes span 40 to 62 (CLLG…FLLW) and 87 to 107 (TVCH…LGFL). The short motif at 129-134 (HSTFFD) is the HXXXXD motif element. N152 carries an N-linked (GlcNAc...) asparagine glycan. Positions 489 to 524 (PPHTSRGTSQTPNASSPGNPTALANGTVQAPKQKGD) are disordered. Over residues 493–518 (SRGTSQTPNASSPGNPTALANGTVQA) the composition is skewed to polar residues.

It belongs to the 1-acyl-sn-glycerol-3-phosphate acyltransferase family. In terms of tissue distribution, widely expressed with predominant level in brain.

The protein localises to the endoplasmic reticulum membrane. It catalyses the reaction a 1-acyl-sn-glycero-3-phosphoethanolamine + an acyl-CoA = a 1,2-diacyl-sn-glycero-3-phosphoethanolamine + CoA. The enzyme catalyses a 1-O-(1Z-alkenyl)-sn-glycero-3-phosphoethanolamine + an acyl-CoA = a 1-O-(1Z-alkenyl)-2-acyl-sn-glycero-3-phosphoethanolamine + CoA. It carries out the reaction a 1-acyl-sn-glycero-3-phosphocholine + an acyl-CoA = a 1,2-diacyl-sn-glycero-3-phosphocholine + CoA. The catalysed reaction is a 1-O-alkyl-sn-glycero-3-phosphocholine + acetyl-CoA = a 1-O-alkyl-2-acetyl-sn-glycero-3-phosphocholine + CoA. It catalyses the reaction a 1-acyl-sn-glycero-3-phospho-L-serine + an acyl-CoA = a 1,2-diacyl-sn-glycero-3-phospho-L-serine + CoA. The enzyme catalyses octanoyl-CoA + a 1-acyl-sn-glycero-3-phosphoethanolamine = 1-acyl-2-octanoyl-sn-glycero-3-phosphoethanolamine + CoA. It carries out the reaction a 1-acyl-sn-glycero-3-phosphoethanolamine + hexadecanoyl-CoA = 1-acyl-2-hexadecanoyl-sn-glycero-3-phosphoethanolamine + CoA. The catalysed reaction is a 1-acyl-sn-glycero-3-phosphoethanolamine + octadecanoyl-CoA = 1-acyl-2-octadecanoyl-sn-glycero-3-phosphoethanolamine + CoA. It catalyses the reaction a 1-acyl-sn-glycero-3-phosphoethanolamine + (9Z)-octadecenoyl-CoA = 1-acyl-2-(9Z)-octadecenoyl-sn-glycero-3-phosphoethanolamine + CoA. The enzyme catalyses a 1-acyl-sn-glycero-3-phosphoethanolamine + (5Z,8Z,11Z,14Z)-eicosatetraenoyl-CoA = 1-acyl-2-(5Z,8Z,11Z,14Z)-eicosatetraenoyl-sn-glycero-3-phosphoethanolamine + CoA. It carries out the reaction a 1-O-(1Z-alkenyl)-sn-glycero-3-phosphoethanolamine + octanoyl-CoA = 1-O-(1Z)-alkenyl-2-octanoyl-sn-glycero-3-phosphoethanolamine + CoA. The catalysed reaction is a 1-O-(1Z-alkenyl)-sn-glycero-3-phosphoethanolamine + hexadecanoyl-CoA = 1-O-(1Z)-alkenyl-2-hexadecanoyl-sn-glycero-3-phosphoethanolamine + CoA. It catalyses the reaction a 1-O-(1Z-alkenyl)-sn-glycero-3-phosphoethanolamine + octadecanoyl-CoA = 1-O-(1Z)-alkenyl-2-octadecanoyl-sn-glycero-3-phosphoethanolamine + CoA. The enzyme catalyses a 1-O-(1Z-alkenyl)-sn-glycero-3-phosphoethanolamine + (9Z)-octadecenoyl-CoA = 1-O-(1Z)-alkenyl-2-(9Z)-octadecenoyl-sn-glycero-3-phosphoethanolamine + CoA. It carries out the reaction a 1-O-(1Z-alkenyl)-sn-glycero-3-phosphoethanolamine + (5Z,8Z,11Z,14Z)-eicosatetraenoyl-CoA = 1-O-(1Z)-alkenyl-2-(5Z,8Z,11Z,14Z)-eicosatetraenoyl-sn-glycero-3-phosphoethanolamine + CoA. The catalysed reaction is a 1-acyl-sn-glycero-3-phosphocholine + hexadecanoyl-CoA = 1-acyl-2-hexadecanoyl-sn-glycero-3-phosphocholine + CoA. It catalyses the reaction a 1-acyl-sn-glycero-3-phosphocholine + (9Z)-octadecenoyl-CoA = a 1-acyl-2-(9Z)-octadecenoyl-sn-glycero-3-phosphocholine + CoA. The enzyme catalyses 1-O-hexadecyl-sn-glycero-3-phosphocholine + (9Z)-octadecenoyl-CoA = 1-O-hexadecyl-2-(9Z)-octadecenoyl-sn-glycero-3-phosphocholine + CoA. It carries out the reaction 1-O-hexadecyl-sn-glycero-3-phosphocholine + (5Z,8Z,11Z,14Z)-eicosatetraenoyl-CoA = 1-O-hexadecyl-2-(5Z,8Z,11Z,14Z)-eicosatetraenoyl-sn-glycero-3-phosphocholine + CoA. The catalysed reaction is 1-hexadecanoyl-sn-glycero-3-phospho-L-serine + (9Z)-octadecenoyl-CoA = 1-hexadecanoyl-2-(9Z-octadecenoyl)-sn-glycero-3-phospho-L-serine + CoA. It catalyses the reaction 1-octadecanoyl-sn-glycero-3-phospho-(1'-sn-glycerol) + (9Z)-octadecenoyl-CoA = 1-octadecanoyl-2-(9Z-octadecenoyl)-sn-glycero-3-phospho-(1'-sn-glycerol) + CoA. The enzyme catalyses 1-octadecanoyl-sn-glycero-3-phospho-(1'-sn-glycerol) + (5Z,8Z,11Z,14Z)-eicosatetraenoyl-CoA = 1-octadecanoyl-2-(5Z,8Z,11Z,14Z-eicosatetraenoyl)-sn-glycero-3-phospho-(1'-sn-glycerol) + CoA. Its pathway is lipid metabolism; phospholipid metabolism. Functionally, displays acyl-CoA-dependent lysophospholipid acyltransferase activity with a subset of lysophospholipids as substrates; converts lysophosphatidylethanolamine to phosphatidylethanolamine, lysophosphatidylcholine to phosphatidycholine, 1-alkenyl-lysophatidylethanolamine to 1-alkenyl-phosphatidylethanolamine, lysophosphatidylglycerol and alkyl-lysophosphatidylcholine to phosphatidylglycerol and alkyl-phosphatidylcholine, respectively. In contrast, has no lysophosphatidylinositol, glycerol-3-phosphate, diacylglycerol or lysophosphatidic acid acyltransferase activity. Prefers long chain acyl-CoAs (C16, C18) as acyl donors. This chain is Lysophospholipid acyltransferase LPCAT4 (LPCAT4), found in Homo sapiens (Human).